Here is a 704-residue protein sequence, read N- to C-terminus: Elongation factor G (704 aa).

Positions 10–290 constitute a tr-type G domain; sequence NKVRNIGIMA…AVVDFLPSPL (281 aa). Residues 19 to 26, 83 to 87, and 137 to 140 contribute to the GTP site; these read AHIDAGKT, DTPGH, and NKMD. A disordered region spans residues 293–313; the sequence is PPMIGHDPRNEETEMTRKPST. Positions 298-313 are enriched in basic and acidic residues; that stretch reads HDPRNEETEMTRKPST.

Belongs to the TRAFAC class translation factor GTPase superfamily. Classic translation factor GTPase family. EF-G/EF-2 subfamily.

It localises to the cytoplasm. Functionally, catalyzes the GTP-dependent ribosomal translocation step during translation elongation. During this step, the ribosome changes from the pre-translocational (PRE) to the post-translocational (POST) state as the newly formed A-site-bound peptidyl-tRNA and P-site-bound deacylated tRNA move to the P and E sites, respectively. Catalyzes the coordinated movement of the two tRNA molecules, the mRNA and conformational changes in the ribosome. This is Elongation factor G from Renibacterium salmoninarum (strain ATCC 33209 / DSM 20767 / JCM 11484 / NBRC 15589 / NCIMB 2235).